Consider the following 361-residue polypeptide: tRNA 2-selenouridine synthase (361 aa).

In terms of domain architecture, Rhodanese spans 11-134; that stretch reads LLADTPLIDV…LRQTAIQATW (124 aa). Cys94 functions as the S-selanylcysteine intermediate in the catalytic mechanism.

The protein belongs to the SelU family. As to quaternary structure, monomer.

The enzyme catalyses 5-methylaminomethyl-2-thiouridine(34) in tRNA + selenophosphate + (2E)-geranyl diphosphate + H2O + H(+) = 5-methylaminomethyl-2-selenouridine(34) in tRNA + (2E)-thiogeraniol + phosphate + diphosphate. The catalysed reaction is 5-methylaminomethyl-2-thiouridine(34) in tRNA + (2E)-geranyl diphosphate = 5-methylaminomethyl-S-(2E)-geranyl-thiouridine(34) in tRNA + diphosphate. It catalyses the reaction 5-methylaminomethyl-S-(2E)-geranyl-thiouridine(34) in tRNA + selenophosphate + H(+) = 5-methylaminomethyl-2-(Se-phospho)selenouridine(34) in tRNA + (2E)-thiogeraniol. It carries out the reaction 5-methylaminomethyl-2-(Se-phospho)selenouridine(34) in tRNA + H2O = 5-methylaminomethyl-2-selenouridine(34) in tRNA + phosphate. Its function is as follows. Involved in the post-transcriptional modification of the uridine at the wobble position (U34) of tRNA(Lys), tRNA(Glu) and tRNA(Gln). Catalyzes the conversion of 2-thiouridine (S2U-RNA) to 2-selenouridine (Se2U-RNA). Acts in a two-step process involving geranylation of 2-thiouridine (S2U) to S-geranyl-2-thiouridine (geS2U) and subsequent selenation of the latter derivative to 2-selenouridine (Se2U) in the tRNA chain. The polypeptide is tRNA 2-selenouridine synthase (Salmonella schwarzengrund (strain CVM19633)).